Reading from the N-terminus, the 430-residue chain is Serine/threonine-protein kinase Sgk1 (430 aa).

The interval 1–60 is necessary for localization to the mitochondria; sequence MTVKTEAARSTLTYSRMRGMVAILIAFMKQRRMGLNDFIQKLANNSYACKHPEVQSYLKI. The segment at 66 to 92 is disordered; the sequence is PELMNANPSPPPSPSQQINLGPSSNPH. At S74 the chain carries Phosphoserine. S78 carries the phosphoserine; by MAPK7 modification. Residues 81 to 91 show a composition bias toward polar residues; the sequence is QQINLGPSSNP. The 257-residue stretch at 98-354 folds into the Protein kinase domain; that stretch reads FHFLKVIGKG…FMEIKSHIFF (257 aa). ATP-binding positions include 104 to 112 and K127; that span reads IGKGSFGKV. Residues 131 to 141 carry the Nuclear localization signal motif; that stretch reads KKAILKKKEEK. D222 functions as the Proton acceptor in the catalytic mechanism. The residue at position 256 (T256) is a Phosphothreonine; by PDPK1. The AGC-kinase C-terminal domain occupies 355–430; that stretch reads SLINWDDLIN…SYAPPMDSFL (76 aa). At T368 the chain carries Phosphothreonine; by PKA. Phosphoserine occurs at positions 396, 400, and 421.

It belongs to the protein kinase superfamily. AGC Ser/Thr protein kinase family. In terms of assembly, homodimer; disulfide-linked. Forms a trimeric complex with FBXW7 and NOTCH1. Interacts with MAPK3/ERK1, MAPK1/ERK2, MAP2K1/MEK1, MAP2K2/MEK2, NEDD4, NEDD4L, MAPK7, CREB1, SLC9A3R2/NHERF2 and KCNJ1/ROMK1. Associates with the mammalian target of rapamycin complex 2 (mTORC2) via an interaction with MAPKAP1/SIN1. Interacts with MAPT/TAU. Post-translationally, regulated by phosphorylation. Activated by phosphorylation on Ser-421 by mTORC2, transforming it into a substrate for PDPK1 which phosphorylates it on Thr-256. Phosphorylation on Ser-396 and Ser-400 are also essential for its activity. Phosphorylation on Ser-78 by MAPK7 is required for growth factor-induced cell cycle progression. In terms of processing, ubiquitinated by NEDD4L; which promotes proteasomal degradation. Ubiquitinated by SYVN1 at the endoplasmic reticulum; which promotes rapid proteasomal degradation and maintains a high turnover rate in resting cells. In terms of tissue distribution, expressed in most tissues with highest levels in the ovary, thymus and lung. In the kidney, expressed within glomeruli of the cortex, at low levels in outer medulla and moderate levels in inner medulla and papilla.

It localises to the cytoplasm. Its subcellular location is the nucleus. The protein localises to the endoplasmic reticulum membrane. It is found in the cell membrane. The protein resides in the mitochondrion. It carries out the reaction L-seryl-[protein] + ATP = O-phospho-L-seryl-[protein] + ADP + H(+). The catalysed reaction is L-threonyl-[protein] + ATP = O-phospho-L-threonyl-[protein] + ADP + H(+). With respect to regulation, two specific sites, one in the kinase domain (Thr-256) and the other in the C-terminal regulatory region (Ser-421), need to be phosphorylated for its full activation. Phosphorylation at Ser-396 and Ser-400 are also essential for its activity. Activated by WNK1, WNK2, WNK3 and WNK4. Functionally, serine/threonine-protein kinase which is involved in the regulation of a wide variety of ion channels, membrane transporters, cellular enzymes, transcription factors, neuronal excitability, cell growth, proliferation, survival, migration and apoptosis. Plays an important role in cellular stress response. Contributes to regulation of renal Na(+) retention, renal K(+) elimination, salt appetite, gastric acid secretion, intestinal Na(+)/H(+) exchange and nutrient transport, insulin-dependent salt sensitivity of blood pressure, salt sensitivity of peripheral glucose uptake, cardiac repolarization and memory consolidation. Up-regulates Na(+) channels: SCNN1A/ENAC, SCN5A and ASIC1/ACCN2, K(+) channels: KCNJ1/ROMK1, KCNA1-5, KCNQ1-5 and KCNE1, epithelial Ca(2+) channels: TRPV5 and TRPV6, chloride channels: BSND, CLCN2 and CFTR, glutamate transporters: SLC1A3/EAAT1, SLC1A2 /EAAT2, SLC1A1/EAAT3, SLC1A6/EAAT4 and SLC1A7/EAAT5, amino acid transporters: SLC1A5/ASCT2, SLC38A1/SN1 and SLC6A19, creatine transporter: SLC6A8, Na(+)/dicarboxylate cotransporter: SLC13A2/NADC1, Na(+)-dependent phosphate cotransporter: SLC34A2/NAPI-2B, glutamate receptor: GRIK2/GLUR6. Up-regulates carriers: SLC9A3/NHE3, SLC12A1/NKCC2, SLC12A3/NCC, SLC5A3/SMIT, SLC2A1/GLUT1, SLC5A1/SGLT1 and SLC15A2/PEPT2. Regulates enzymes: GSK3A/B, PMM2 and Na(+)/K(+) ATPase, and transcription factors: CTNNB1 and nuclear factor NF-kappa-B. Stimulates sodium transport into epithelial cells by enhancing the stability and expression of SCNN1A/ENAC. This is achieved by phosphorylating the NEDD4L ubiquitin E3 ligase, promoting its interaction with 14-3-3 proteins, thereby preventing it from binding to SCNN1A/ENAC and targeting it for degradation. Regulates store-operated Ca(+2) entry (SOCE) by stimulating ORAI1 and STIM1. Regulates KCNJ1/ROMK1 directly via its phosphorylation or indirectly via increased interaction with SLC9A3R2/NHERF2. Phosphorylates MDM2 and activates MDM2-dependent ubiquitination of p53/TP53. Phosphorylates SLC2A4/GLUT4 and up-regulates its activity. Phosphorylates APBB1/FE65 and promotes its localization to the nucleus. Phosphorylates FBXW7 and plays an inhibitory role in the NOTCH1 signaling. Phosphorylates FOXO1 resulting in its relocalization from the nucleus to the cytoplasm. Phosphorylates FOXO3, promoting its exit from the nucleus and interference with FOXO3-dependent transcription. Phosphorylates BRAF and MAP3K3/MEKK3 and inhibits their activity. Phosphorylates SLC9A3/NHE3 in response to dexamethasone, resulting in its activation and increased localization at the cell membrane. Phosphorylates CREB1. Necessary for vascular remodeling during angiogenesis. Phosphorylates MAPT/TAU and mediates microtubule depolymerization and neurite formation in hippocampal neurons. Phosphorylates MAPK1/ERK2 and activates it by enhancing its interaction with MAP2K1/MEK1 and MAP2K2/MEK2. May also play an important role in the development of particular groups of neurons in the postnatal brain. The polypeptide is Serine/threonine-protein kinase Sgk1 (Sgk1) (Rattus norvegicus (Rat)).